Reading from the N-terminus, the 142-residue chain is Translation initiation factor 2 subunit beta (142 aa).

Belongs to the eIF-2-beta/eIF-5 family. In terms of assembly, heterotrimer composed of an alpha, a beta and a gamma chain.

EIF-2 functions in the early steps of protein synthesis by forming a ternary complex with GTP and initiator tRNA. The sequence is that of Translation initiation factor 2 subunit beta from Thermococcus kodakarensis (strain ATCC BAA-918 / JCM 12380 / KOD1) (Pyrococcus kodakaraensis (strain KOD1)).